The sequence spans 549 residues: Oxygen-dependent choline dehydrogenase (549 aa).

4–33 contributes to the FAD binding site; the sequence is DFVIIGSGSAGSALAYRLSEGGKNSVIVIE. The Proton acceptor role is filled by His465.

This sequence belongs to the GMC oxidoreductase family. FAD serves as cofactor.

The catalysed reaction is choline + A = betaine aldehyde + AH2. It carries out the reaction betaine aldehyde + NAD(+) + H2O = glycine betaine + NADH + 2 H(+). It functions in the pathway amine and polyamine biosynthesis; betaine biosynthesis via choline pathway; betaine aldehyde from choline (cytochrome c reductase route): step 1/1. Involved in the biosynthesis of the osmoprotectant glycine betaine. Catalyzes the oxidation of choline to betaine aldehyde and betaine aldehyde to glycine betaine at the same rate. In Rhizobium johnstonii (strain DSM 114642 / LMG 32736 / 3841) (Rhizobium leguminosarum bv. viciae), this protein is Oxygen-dependent choline dehydrogenase.